A 166-amino-acid polypeptide reads, in one-letter code: Ribosome maturation factor RimM (166 aa).

The 73-residue stretch at 92–164 (EGVYYDFQLI…KIIIDPIPGL (73 aa)) folds into the PRC barrel domain.

It belongs to the RimM family. In terms of assembly, binds ribosomal protein uS19.

Its subcellular location is the cytoplasm. Its function is as follows. An accessory protein needed during the final step in the assembly of 30S ribosomal subunit, possibly for assembly of the head region. Essential for efficient processing of 16S rRNA. May be needed both before and after RbfA during the maturation of 16S rRNA. It has affinity for free ribosomal 30S subunits but not for 70S ribosomes. This Dehalococcoides mccartyi (strain CBDB1) protein is Ribosome maturation factor RimM.